The following is a 588-amino-acid chain: Aspartate--tRNA ligase (588 aa).

Glu-172 contributes to the L-aspartate binding site. An aspartate region spans residues Gln-196–Lys-199. Residue Arg-218 participates in L-aspartate binding. ATP is bound by residues Arg-218 to Glu-220 and Gln-227. His-449 lines the L-aspartate pocket. Glu-483 lines the ATP pocket. Arg-490 provides a ligand contact to L-aspartate. Gly-535–Arg-538 lines the ATP pocket.

It belongs to the class-II aminoacyl-tRNA synthetase family. Type 1 subfamily. As to quaternary structure, homodimer.

It is found in the cytoplasm. The enzyme catalyses tRNA(Asp) + L-aspartate + ATP = L-aspartyl-tRNA(Asp) + AMP + diphosphate. Functionally, catalyzes the attachment of L-aspartate to tRNA(Asp) in a two-step reaction: L-aspartate is first activated by ATP to form Asp-AMP and then transferred to the acceptor end of tRNA(Asp). The sequence is that of Aspartate--tRNA ligase from Haemophilus influenzae (strain ATCC 51907 / DSM 11121 / KW20 / Rd).